The following is a 310-amino-acid chain: Protein-L-isoaspartate O-methyltransferase (310 aa).

2 disordered regions span residues 1 to 46 (MSGE…DKPA) and 60 to 79 (ALPG…TVLK). The segment covering 14–34 (EDLKRAPRKSEVRSGSGERHA) has biased composition (basic and acidic residues). Positions 35–46 (ASAVPKAADKPA) are enriched in low complexity. Residue Ser-157 is part of the active site.

Belongs to the methyltransferase superfamily. L-isoaspartyl/D-aspartyl protein methyltransferase family.

Its subcellular location is the cytoplasm. The catalysed reaction is [protein]-L-isoaspartate + S-adenosyl-L-methionine = [protein]-L-isoaspartate alpha-methyl ester + S-adenosyl-L-homocysteine. Functionally, catalyzes the methyl esterification of L-isoaspartyl residues in peptides and proteins that result from spontaneous decomposition of normal L-aspartyl and L-asparaginyl residues. It plays a role in the repair and/or degradation of damaged proteins. This chain is Protein-L-isoaspartate O-methyltransferase, found in Burkholderia ambifaria (strain ATCC BAA-244 / DSM 16087 / CCUG 44356 / LMG 19182 / AMMD) (Burkholderia cepacia (strain AMMD)).